A 465-amino-acid polypeptide reads, in one-letter code: Ribulose bisphosphate carboxylase large chain (465 aa).

Lys4 carries the N6,N6,N6-trimethyllysine modification. Residues Asn113 and Thr163 each contribute to the substrate site. The Proton acceptor role is filled by Lys165. Position 167 (Lys167) interacts with substrate. Mg(2+)-binding residues include Lys191, Asp193, and Glu194. Residue Lys191 is modified to N6-carboxylysine. His284 functions as the Proton acceptor in the catalytic mechanism. The substrate site is built by Arg285, His317, and Ser369.

Belongs to the RuBisCO large chain family. Type I subfamily. Heterohexadecamer of 8 large chains and 8 small chains; disulfide-linked. The disulfide link is formed within the large subunit homodimers. It depends on Mg(2+) as a cofactor. The disulfide bond which can form in the large chain dimeric partners within the hexadecamer appears to be associated with oxidative stress and protein turnover.

The protein resides in the plastid. It localises to the chloroplast. It carries out the reaction 2 (2R)-3-phosphoglycerate + 2 H(+) = D-ribulose 1,5-bisphosphate + CO2 + H2O. The enzyme catalyses D-ribulose 1,5-bisphosphate + O2 = 2-phosphoglycolate + (2R)-3-phosphoglycerate + 2 H(+). Its function is as follows. RuBisCO catalyzes two reactions: the carboxylation of D-ribulose 1,5-bisphosphate, the primary event in carbon dioxide fixation, as well as the oxidative fragmentation of the pentose substrate in the photorespiration process. Both reactions occur simultaneously and in competition at the same active site. In Manilkara zapota (Sapodilla plum), this protein is Ribulose bisphosphate carboxylase large chain.